A 123-amino-acid chain; its full sequence is cAMP-responsive element-binding protein-like 2 (123 aa).

Residues 1–24 (MDDSKVVGGKVKKPGKRGRKPAKI) form a disordered region. The span at 10–21 (KVKKPGKRGRKP) shows a compositional bias: basic residues. A bZIP domain is found at 23–86 (KIDLKAKLER…MAMDQGKIPS (64 aa)). The tract at residues 29–60 (KLERSRQSARECRARKKLRYQYLEELVSSRER) is basic motif. A leucine-zipper region spans residues 62–69 (ICALREEL). Residues 92–123 (LTGEEQSKPQQNSSRHPKAGKTDANTNSLVGN) are disordered. Residues 114–123 (DANTNSLVGN) show a composition bias toward polar residues.

It belongs to the bZIP family. ATF subfamily. In terms of assembly, interacts with CREB1; regulates CREB1 phosphorylation, stability and transcriptional activity. In terms of processing, phosphorylated by AMPK. Widely expressed with higher expression in adipose tissue, skeletal muscle, and liver (at protein level).

Its subcellular location is the nucleus. Functionally, probable regulator of CREB1 transcriptional activity which is involved in adipose cells differentiation. May also play a regulatory role in the cell cycle. This Mus musculus (Mouse) protein is cAMP-responsive element-binding protein-like 2 (Crebl2).